Here is a 194-residue protein sequence, read N- to C-terminus: Imidazoleglycerol-phosphate dehydratase (194 aa).

Belongs to the imidazoleglycerol-phosphate dehydratase family.

It localises to the cytoplasm. The enzyme catalyses D-erythro-1-(imidazol-4-yl)glycerol 3-phosphate = 3-(imidazol-4-yl)-2-oxopropyl phosphate + H2O. It functions in the pathway amino-acid biosynthesis; L-histidine biosynthesis; L-histidine from 5-phospho-alpha-D-ribose 1-diphosphate: step 6/9. The polypeptide is Imidazoleglycerol-phosphate dehydratase (Bacillus cereus (strain AH187)).